The following is a 721-amino-acid chain: MTQQNAHSEGKCPVMHGSMTTNNRTEKNWWPKSLNLDILHQHDAKTNPMPSDFDYQEEVKKLDFSALKQDLIALMTDSQEWWPADWGHYGGLMIRMSWHAAGTYRIADGRGGAGTGNLRFAPLNSWPDNANLDKARRILWPIKKKYGNQLSWADLIAYAGTMAYESMGLKTFGFGFGREDIWHPEKDIYWGSEKEWLAPTNNPNSRYSGERDLENPLAAVMMGLIYVNPEGVDGQPDPLKTAHDVRVTFARMAMNDEETVALTAGGHTVGKAHGNGDAANLGPEPEGADIHDQGLGWLNKTTRGVGNNAVTSGIEGAWTSQPTQWDNGYFHLLLNYDWELKKSPAGAWQWEPIDIKEEDKPVDPENPNVRHNPIMTDADMAMKMDPEYRKISERFHSDPAYFADTFARAWFKLTHRDMGPKARYIGPDVPQEDLIWQDPVPNGNANYDIDAVKAKIAASGLSVSDMVTTAWDSARTFRQSDKRGGANGARVRLAPQKDWQGNEPERLARVLPVLENIAKDTGASVADVVVLAGNVGIEQAASAAGVNVTVPFLPGRGDATQEMTDVESFEVLEPLHDGYRNWLKQNYVVTPEEMLLDRTQLMGLTAAEMTVLVGGMRVLGTNHGGSKHGVFTDRVGQLTNDFFINLTDMKYTWEPVGENLYEIRSRRSKDVKWTATRVDLVFGSNSILRAYAELYAQDDNAGKFVEDFVAAWTKVMNADRF.

The tryptophyl-tyrosyl-methioninium (Trp-Tyr) (with M-252) cross-link spans 98 to 226 (WHAAGTYRIA…LAAVMMGLIY (129 aa)). Residue H99 is the Proton acceptor of the active site. The tryptophyl-tyrosyl-methioninium (Tyr-Met) (with W-98) cross-link spans 226 to 252 (YVNPEGVDGQPDPLKTAHDVRVTFARM). H267 is a binding site for heme b.

Belongs to the peroxidase family. Peroxidase/catalase subfamily. In terms of assembly, homodimer or homotetramer. It depends on heme b as a cofactor. In terms of processing, formation of the three residue Trp-Tyr-Met cross-link is important for the catalase, but not the peroxidase activity of the enzyme.

The catalysed reaction is H2O2 + AH2 = A + 2 H2O. It catalyses the reaction 2 H2O2 = O2 + 2 H2O. In terms of biological role, bifunctional enzyme with both catalase and broad-spectrum peroxidase activity. The polypeptide is Catalase-peroxidase 1 (Vibrio parahaemolyticus serotype O3:K6 (strain RIMD 2210633)).